The chain runs to 394 residues: 8-amino-7-oxononanoate synthase (394 aa).

Arginine 21 contacts substrate. Residue glycine 112–tyrosine 113 coordinates pyridoxal 5'-phosphate. Histidine 137 contacts substrate. Positions 183, 211, and 239 each coordinate pyridoxal 5'-phosphate. Lysine 242 bears the N6-(pyridoxal phosphate)lysine mark. Threonine 358 provides a ligand contact to substrate.

It belongs to the class-II pyridoxal-phosphate-dependent aminotransferase family. BioF subfamily. Homodimer. The cofactor is pyridoxal 5'-phosphate.

The catalysed reaction is 6-carboxyhexanoyl-[ACP] + L-alanine + H(+) = (8S)-8-amino-7-oxononanoate + holo-[ACP] + CO2. Its pathway is cofactor biosynthesis; biotin biosynthesis. Catalyzes the decarboxylative condensation of pimeloyl-[acyl-carrier protein] and L-alanine to produce 8-amino-7-oxononanoate (AON), [acyl-carrier protein], and carbon dioxide. This is 8-amino-7-oxononanoate synthase from Burkholderia pseudomallei (strain K96243).